The following is a 229-amino-acid chain: Lipoprotein-releasing system ATP-binding protein LolD (229 aa).

Residues His9–Val228 enclose the ABC transporter domain. ATP is bound at residue Gly42–Ser49.

This sequence belongs to the ABC transporter superfamily. Lipoprotein translocase (TC 3.A.1.125) family. As to quaternary structure, the complex is composed of two ATP-binding proteins (LolD) and two transmembrane proteins (LolC and LolE).

The protein localises to the cell inner membrane. In terms of biological role, part of the ABC transporter complex LolCDE involved in the translocation of mature outer membrane-directed lipoproteins, from the inner membrane to the periplasmic chaperone, LolA. Responsible for the formation of the LolA-lipoprotein complex in an ATP-dependent manner. The chain is Lipoprotein-releasing system ATP-binding protein LolD from Photobacterium profundum (strain SS9).